Consider the following 264-residue polypeptide: tRNA pseudouridine synthase A (264 aa).

Catalysis depends on D51, which acts as the Nucleophile. Residue Y109 participates in substrate binding.

This sequence belongs to the tRNA pseudouridine synthase TruA family. Homodimer.

It carries out the reaction uridine(38/39/40) in tRNA = pseudouridine(38/39/40) in tRNA. Formation of pseudouridine at positions 38, 39 and 40 in the anticodon stem and loop of transfer RNAs. In Polaromonas sp. (strain JS666 / ATCC BAA-500), this protein is tRNA pseudouridine synthase A.